We begin with the raw amino-acid sequence, 228 residues long: DNA mismatch repair protein MutH (228 aa).

The protein belongs to the MutH family.

It localises to the cytoplasm. Sequence-specific endonuclease that cleaves unmethylated GATC sequences. It is involved in DNA mismatch repair. The chain is DNA mismatch repair protein MutH from Yersinia pseudotuberculosis serotype O:1b (strain IP 31758).